Reading from the N-terminus, the 169-residue chain is U3 small nucleolar ribonucleoprotein protein imp3 (169 aa).

Residues 109–166 (RRLPVVMCRLKMCETVSTSVKYVEHGHVRVGPEVITDPAFFVTRNMEDFVTWVDSSKI) form the S4 RNA-binding domain.

This sequence belongs to the universal ribosomal protein uS4 family. As to quaternary structure, component of a heterotrimeric complex containing imp3, imp4 and mpp10.

The protein resides in the nucleus. It localises to the nucleolus. In terms of biological role, component of the U3 small nucleolar ribonucleoprotein. Required for the early cleavages at sites A0, A1 and A2 during 18S ribosomal pre-RNA processing. The protein is U3 small nucleolar ribonucleoprotein protein imp3 (RBP) of Pneumocystis carinii.